The following is a 514-amino-acid chain: Bifunctional purine biosynthesis protein PurH (514 aa).

Positions 1 to 146 (MPPLALLSTS…KNFAHVTVLC (146 aa)) constitute an MGS-like domain.

This sequence belongs to the PurH family.

It carries out the reaction (6R)-10-formyltetrahydrofolate + 5-amino-1-(5-phospho-beta-D-ribosyl)imidazole-4-carboxamide = 5-formamido-1-(5-phospho-D-ribosyl)imidazole-4-carboxamide + (6S)-5,6,7,8-tetrahydrofolate. It catalyses the reaction IMP + H2O = 5-formamido-1-(5-phospho-D-ribosyl)imidazole-4-carboxamide. Its pathway is purine metabolism; IMP biosynthesis via de novo pathway; 5-formamido-1-(5-phospho-D-ribosyl)imidazole-4-carboxamide from 5-amino-1-(5-phospho-D-ribosyl)imidazole-4-carboxamide (10-formyl THF route): step 1/1. It participates in purine metabolism; IMP biosynthesis via de novo pathway; IMP from 5-formamido-1-(5-phospho-D-ribosyl)imidazole-4-carboxamide: step 1/1. This Cyanothece sp. (strain PCC 7425 / ATCC 29141) protein is Bifunctional purine biosynthesis protein PurH.